The sequence spans 439 residues: Acyl-lipid (8-3)-desaturase (439 aa).

Positions 7 to 88 constitute a Cytochrome b5 heme-binding domain; it reads GRSAAREMTA…LPKLDASKVE (82 aa). Heme contacts are provided by His-40 and His-66. The helical transmembrane segment at 123–143 threads the bilayer; it reads IPHMIYRVVEIVALFALSFWL. The Histidine box-1 signature appears at 171 to 175; that stretch reads HEMGH. A Histidine box-2 motif is present at residues 208–213; the sequence is HSKHHA. 3 helical membrane passes run 254-274, 287-307, and 312-332; these read AYLF…LYLH, FVWI…LGYS, and VGMY…QFAV. Residues 376-380 carry the Histidine box-3 motif; the sequence is QIEHH.

It belongs to the fatty acid desaturase type 1 family. Requires Fe(2+) as cofactor.

It localises to the membrane. It catalyses the reaction an (8Z,11Z,14Z)-icosatrienoyl-containing glycerolipid + 2 Fe(II)-[cytochrome b5] + O2 + 2 H(+) = (5Z,8Z,11Z,14Z)-eicosatetraenoyl-containing glycerolipid + 2 Fe(III)-[cytochrome b5] + 2 H2O. It carries out the reaction an (8Z,11Z,14Z,17Z)-eicosatetraenoyl-containing glycerolipid + 2 Fe(II)-[cytochrome b5] + O2 + 2 H(+) = a (5Z,8Z,11Z,14Z,17Z)-eicosapentaenoyl-containing glycerolipid + 2 Fe(III)-[cytochrome b5] + 2 H2O. Functionally, fatty acid desaturase that introduces a cis double bond at the 5-position in 20-carbon polyunsaturated fatty acids incorporated in a glycerolipid that contain a Delta(8) double bond. The sequence is that of Acyl-lipid (8-3)-desaturase from Thraustochytrium sp.